A 208-amino-acid chain; its full sequence is Putative vomeronasal receptor-like protein 4 (208 aa).

Residues 1–19 (MEMTKLFSYIVIKNVYYPQ) are Extracellular-facing. Residues 20-40 (VSFGISANTFLLLFHIFTFAY) traverse the membrane as a helical segment. The Cytoplasmic segment spans residues 41-48 (THRLKPID). The helical transmembrane segment at 49-69 (MTISHLPLIHILLLFTQAILV) threads the bilayer. The Extracellular segment spans residues 70–97 (SSDLFESWNIQNNDLKCKIITFLNRVMR). The cysteines at positions 86 and 173 are disulfide-linked. A helical membrane pass occupies residues 98–118 (GVSICTTCLLSVLQAITISPS). Over 119–135 (TSFLEKFKHISANHTLG) the chain is Cytoplasmic. The chain crosses the membrane as a helical span at residues 136-156 (FILFSWVLNMFITNNLLLFIV). Topologically, residues 157–183 (PTPNRIGASLLFVTEHCYVLPMSYTHR) are extracellular. A helical transmembrane segment spans residues 184-204 (SLFFILMVLRDVIFIGLMVLS). Residues 205–208 (SGYG) lie on the Cytoplasmic side of the membrane.

Belongs to the G-protein coupled receptor 1 family. As to expression, expressed in olfactory nerve.

It is found in the cell membrane. Its function is as follows. Putative pheromone receptor. The protein is Putative vomeronasal receptor-like protein 4 (VN1R17P) of Homo sapiens (Human).